The primary structure comprises 146 residues: uncharacterized protein (146 aa).

The 140-residue stretch at Leu7–Pro146 folds into the N-acetyltransferase domain.

This is an uncharacterized protein from Staphylococcus epidermidis (strain ATCC 35984 / DSM 28319 / BCRC 17069 / CCUG 31568 / BM 3577 / RP62A).